The chain runs to 779 residues: MKLVIVESPAKAKTINKYLGDEFKVIASFGHIRDLPSKKGSVLPDKNFAMEYDISDKASKYVDAIVKYARKAEAVYLATDPDREGESISWHVAEVIKEKNKVESDDFFKRVAFNEITKKAIIHAVENPRKLDTNLVNAQQARRALDYLVGFTLSPLLWRKLPGCKSAGRVQSVALRLICDREDEIERFKAEEYWDISLKMQNSNNELFTAKLTHVNDQKLKKFSIINEKEAKDLTRKLKLQKFYVEKIEKKQQKRQPQPPFITSSLQQEAARKLGFSAKKTMQIAQKLYEGVDIGKETIGLITYMRTDGVTLSNDAIADIRKLIDKNYGNKYLPINPRIYQSKVKNAQEAHEAIRPTNITYTPDNLKQKLEKDYYKLYELIWQRTIACQMENVIMDLVIANLASENKEYLAKANGSIIAFDGFYKVYRESLDDEDEEDNKMLPPLKAQEHIKTKEVIPNKHFTEPPPRYSEASLVKKLEELGIGRPSTYASILSVLQDRKYVTLEKKRFIPEELGRLVTVFLVGFFKKYVEYDFTAGLENELDEIAAGKLEWKTSLNNFWSGFNNNIESVNEQKITEIINYLQKALDYHLFGENKESKVCPSCKTGQLSLKLGKFGAFLACSNYPECTFKKSIVSGNDNNEDEGNLSTILNDNKILGTDKDGVEIYLKTGPYGPYIQLGEQCGKVKPKRTPVPTNLKQSEITLEVALKLLSLPLKIGIHKDSGEEIIIGYSKFGPYIKYMCKFISVPKKYDFLNLNLDDAIKLIENNKAKLEKKHRSMV.

Residues 1–111 (MKLVIVESPA…VESDDFFKRV (111 aa)) enclose the Toprim domain. Mg(2+)-binding residues include Glu7 and Asp80. Positions 132 to 568 (DTNLVNAQQA…FWSGFNNNIE (437 aa)) constitute a Topo IA-type catalytic domain. An interaction with DNA region spans residues 166–171 (SAGRVQ). The active-site O-(5'-phospho-DNA)-tyrosine intermediate is the Tyr304. The C4-type zinc finger occupies 600-627 (CPSCKTGQLSLKLGKFGAFLACSNYPEC).

Belongs to the type IA topoisomerase family. As to quaternary structure, monomer. The cofactor is Mg(2+).

The enzyme catalyses ATP-independent breakage of single-stranded DNA, followed by passage and rejoining.. Its function is as follows. Releases the supercoiling and torsional tension of DNA, which is introduced during the DNA replication and transcription, by transiently cleaving and rejoining one strand of the DNA duplex. Introduces a single-strand break via transesterification at a target site in duplex DNA. The scissile phosphodiester is attacked by the catalytic tyrosine of the enzyme, resulting in the formation of a DNA-(5'-phosphotyrosyl)-enzyme intermediate and the expulsion of a 3'-OH DNA strand. The free DNA strand then undergoes passage around the unbroken strand, thus removing DNA supercoils. Finally, in the religation step, the DNA 3'-OH attacks the covalent intermediate to expel the active-site tyrosine and restore the DNA phosphodiester backbone. In Rickettsia typhi (strain ATCC VR-144 / Wilmington), this protein is DNA topoisomerase 1.